The chain runs to 140 residues: Ribosome-binding factor A (140 aa).

Belongs to the RbfA family. Monomer. Binds 30S ribosomal subunits, but not 50S ribosomal subunits or 70S ribosomes.

The protein resides in the cytoplasm. Its function is as follows. One of several proteins that assist in the late maturation steps of the functional core of the 30S ribosomal subunit. Associates with free 30S ribosomal subunits (but not with 30S subunits that are part of 70S ribosomes or polysomes). Required for efficient processing of 16S rRNA. May interact with the 5'-terminal helix region of 16S rRNA. The protein is Ribosome-binding factor A of Cereibacter sphaeroides (strain ATCC 17023 / DSM 158 / JCM 6121 / CCUG 31486 / LMG 2827 / NBRC 12203 / NCIMB 8253 / ATH 2.4.1.) (Rhodobacter sphaeroides).